Reading from the N-terminus, the 638-residue chain is 1-deoxy-D-xylulose-5-phosphate synthase (638 aa).

Residues His79 and 120–122 (GHS) contribute to the thiamine diphosphate site. Asp151 serves as a coordination point for Mg(2+). Thiamine diphosphate-binding positions include 152–153 (GA), Asn182, Tyr291, and Glu373. Mg(2+) is bound at residue Asn182.

It belongs to the transketolase family. DXPS subfamily. Homodimer. Mg(2+) serves as cofactor. It depends on thiamine diphosphate as a cofactor.

It carries out the reaction D-glyceraldehyde 3-phosphate + pyruvate + H(+) = 1-deoxy-D-xylulose 5-phosphate + CO2. Its pathway is metabolic intermediate biosynthesis; 1-deoxy-D-xylulose 5-phosphate biosynthesis; 1-deoxy-D-xylulose 5-phosphate from D-glyceraldehyde 3-phosphate and pyruvate: step 1/1. In terms of biological role, catalyzes the acyloin condensation reaction between C atoms 2 and 3 of pyruvate and glyceraldehyde 3-phosphate to yield 1-deoxy-D-xylulose-5-phosphate (DXP). In Xanthomonas oryzae pv. oryzae (strain MAFF 311018), this protein is 1-deoxy-D-xylulose-5-phosphate synthase.